We begin with the raw amino-acid sequence, 403 residues long: 8-amino-7-oxononanoate synthase (403 aa).

Substrate is bound at residue Arg22. 109–110 serves as a coordination point for pyridoxal 5'-phosphate; it reads GF. His134 is a binding site for substrate. Pyridoxal 5'-phosphate-binding residues include Ser178, His206, and Thr232. The residue at position 235 (Lys235) is an N6-(pyridoxal phosphate)lysine. Thr348 lines the substrate pocket. The interval 383-403 is disordered; that stretch reads SNDSGSKPSIESSFELKKEAQ. Residues 385–394 are compositionally biased toward polar residues; it reads DSGSKPSIES.

It belongs to the class-II pyridoxal-phosphate-dependent aminotransferase family. BioF subfamily. Homodimer. It depends on pyridoxal 5'-phosphate as a cofactor.

The enzyme catalyses 6-carboxyhexanoyl-[ACP] + L-alanine + H(+) = (8S)-8-amino-7-oxononanoate + holo-[ACP] + CO2. It participates in cofactor biosynthesis; biotin biosynthesis. Catalyzes the decarboxylative condensation of pimeloyl-[acyl-carrier protein] and L-alanine to produce 8-amino-7-oxononanoate (AON), [acyl-carrier protein], and carbon dioxide. The sequence is that of 8-amino-7-oxononanoate synthase from Vibrio atlanticus (strain LGP32) (Vibrio splendidus (strain Mel32)).